The primary structure comprises 429 residues: Gamma-glutamyl phosphate reductase (429 aa).

This sequence belongs to the gamma-glutamyl phosphate reductase family.

It is found in the cytoplasm. The catalysed reaction is L-glutamate 5-semialdehyde + phosphate + NADP(+) = L-glutamyl 5-phosphate + NADPH + H(+). It participates in amino-acid biosynthesis; L-proline biosynthesis; L-glutamate 5-semialdehyde from L-glutamate: step 2/2. In terms of biological role, catalyzes the NADPH-dependent reduction of L-glutamate 5-phosphate into L-glutamate 5-semialdehyde and phosphate. The product spontaneously undergoes cyclization to form 1-pyrroline-5-carboxylate. The polypeptide is Gamma-glutamyl phosphate reductase (Sphingopyxis alaskensis (strain DSM 13593 / LMG 18877 / RB2256) (Sphingomonas alaskensis)).